We begin with the raw amino-acid sequence, 362 residues long: Dual-specificity RNA methyltransferase RlmN (362 aa).

The active-site Proton acceptor is the Glu-91. A Radical SAM core domain is found at 97–333 (EDDRGTLCVS…VTTRKTRGED (237 aa)). Cysteines 104 and 338 form a disulfide. The [4Fe-4S] cluster site is built by Cys-111, Cys-115, and Cys-118. S-adenosyl-L-methionine is bound by residues 164-165 (GE), Ser-196, 218-220 (SLH), and Asn-295. Cys-338 serves as the catalytic S-methylcysteine intermediate.

It belongs to the radical SAM superfamily. RlmN family. [4Fe-4S] cluster serves as cofactor.

It is found in the cytoplasm. The catalysed reaction is adenosine(2503) in 23S rRNA + 2 reduced [2Fe-2S]-[ferredoxin] + 2 S-adenosyl-L-methionine = 2-methyladenosine(2503) in 23S rRNA + 5'-deoxyadenosine + L-methionine + 2 oxidized [2Fe-2S]-[ferredoxin] + S-adenosyl-L-homocysteine. The enzyme catalyses adenosine(37) in tRNA + 2 reduced [2Fe-2S]-[ferredoxin] + 2 S-adenosyl-L-methionine = 2-methyladenosine(37) in tRNA + 5'-deoxyadenosine + L-methionine + 2 oxidized [2Fe-2S]-[ferredoxin] + S-adenosyl-L-homocysteine. Specifically methylates position 2 of adenine 2503 in 23S rRNA and position 2 of adenine 37 in tRNAs. m2A2503 modification seems to play a crucial role in the proofreading step occurring at the peptidyl transferase center and thus would serve to optimize ribosomal fidelity. The polypeptide is Dual-specificity RNA methyltransferase RlmN (Methylobacillus flagellatus (strain ATCC 51484 / DSM 6875 / VKM B-1610 / KT)).